A 214-amino-acid chain; its full sequence is Mexicain (214 aa).

3 disulfides stabilise this stretch: C22–C63, C56–C95, and C153–C200. Residue C25 is part of the active site. E64 is bound at residue C25. Catalysis depends on residues H159 and N175.

Belongs to the peptidase C1 family. As to expression, expressed in latex.

It is found in the secreted. Cysteine protease. The protein is Mexicain of Jacaratia mexicana (Wild papaya).